The chain runs to 515 residues: Bifunctional purine biosynthesis protein PurH (515 aa).

The 145-residue stretch at 1-145 (MTKRALISVS…KNHASVTVVV (145 aa)) folds into the MGS-like domain.

Belongs to the PurH family.

The enzyme catalyses (6R)-10-formyltetrahydrofolate + 5-amino-1-(5-phospho-beta-D-ribosyl)imidazole-4-carboxamide = 5-formamido-1-(5-phospho-D-ribosyl)imidazole-4-carboxamide + (6S)-5,6,7,8-tetrahydrofolate. It catalyses the reaction IMP + H2O = 5-formamido-1-(5-phospho-D-ribosyl)imidazole-4-carboxamide. It functions in the pathway purine metabolism; IMP biosynthesis via de novo pathway; 5-formamido-1-(5-phospho-D-ribosyl)imidazole-4-carboxamide from 5-amino-1-(5-phospho-D-ribosyl)imidazole-4-carboxamide (10-formyl THF route): step 1/1. It participates in purine metabolism; IMP biosynthesis via de novo pathway; IMP from 5-formamido-1-(5-phospho-D-ribosyl)imidazole-4-carboxamide: step 1/1. In Streptococcus agalactiae serotype III (strain NEM316), this protein is Bifunctional purine biosynthesis protein PurH.